A 380-amino-acid polypeptide reads, in one-letter code: MRILYRLLKMADDTVKCYLECCKSSHPKLPLPHNVPVIIGRTPELGITDKLCSRSQLELTSNCYKRYVLVKRLGANTSQINGIDIEKNKSSRLEEGQDLHVVNGKFPHRVYFTGCQNDTKTEKAVVPKLPTKSTDLTKSDLSIKQPERKKLKVSENKSKVLNSKIKPQEKFSSESVYAFDSPSPMSSRCEKKAESNKRAPTHKHWSQGLKASMEDPELVVKEDEQIVVIKDKYPKAKYHWLILPKDSISSTKNLSTDNIELLKHILKVGQELAAEVKDKQPDVEFRFGYHAVASMSQMHMHVISQDFQSSSFKTKKHWNSFTTDYFVDATDIINELETGGKVKDRRTMTSLLNEPLKCHRCKKPQKNIPTLKKHIDSCQK.

Residues 36–85 form the FHA-like domain; the sequence is PVIIGRTPELGITDKLCSRSQLELTSNCYKRYVLVKRLGANTSQINGIDI. The disordered stretch occupies residues 176–207; that stretch reads VYAFDSPSPMSSRCEKKAESNKRAPTHKHWSQ. The span at 188-197 shows a compositional bias: basic and acidic residues; the sequence is RCEKKAESNK. Positions 206–312 constitute an HIT domain; sequence SQGLKASMED…ISQDFQSSSF (107 aa). Interaction with DNA substrate regions lie at residues 231-235 and 294-295; these read DKYPK and SM. The Histidine triad motif signature appears at 297–301; it reads QMHMH. Catalysis depends on histidine 299, which acts as the Tele-AMP-histidine intermediate. The segment at 356-378 adopts a C2H2-type; atypical zinc-finger fold; that stretch reads LKCHRCKKPQKNIPTLKKHIDSC.

It is found in the nucleus. It localises to the nucleoplasm. Its subcellular location is the nucleolus. The catalysed reaction is a 5'-end adenosine-5'-diphospho-5'-2'-deoxyribonucleoside-DNA + H2O = a 5'-end 5'-phospho-2'-deoxyribonucleoside-DNA + AMP + 2 H(+). It carries out the reaction a 5'-end adenosine-5'-diphospho-5'-ribonucleoside-2'-deoxyribonucleotide-DNA + H2O = a 5'-end 5'-phospho-ribonucleoside-2'-deoxyribonucleotide-DNA + AMP + 2 H(+). It catalyses the reaction a 3'-end 2'-deoxyribonucleotide-3'-diphospho-5'-guanosine-DNA + H2O = a 3'-end 2'-deoxyribonucleotide 3'-phosphate-DNA + GMP + 2 H(+). In terms of biological role, DNA-binding protein involved in single-strand DNA break repair, double-strand DNA break repair and base excision repair. Resolves abortive DNA ligation intermediates formed either at base excision sites, or when DNA ligases attempt to repair non-ligatable breaks induced by reactive oxygen species. Catalyzes the release of adenylate groups covalently linked to 5'-phosphate termini, resulting in the production of 5'-phosphate termini that can be efficiently rejoined. Also able to hydrolyze adenosine 5'-monophosphoramidate (AMP-NH(2)) and diadenosine tetraphosphate (AppppA), but with lower catalytic activity. Likewise, catalyzes the release of 3'-linked guanosine (DNAppG) and inosine (DNAppI) from DNA, but has higher specific activity with 5'-linked adenosine (AppDNA). In Ciona intestinalis (Transparent sea squirt), this protein is Aprataxin (APTX).